We begin with the raw amino-acid sequence, 292 residues long: NAD kinase (292 aa).

Residue D74 is the Proton acceptor of the active site. Residues 74–75 (DG), 147–148 (NE), D177, and 188–193 (TGYSLS) each bind NAD(+).

The protein belongs to the NAD kinase family. The cofactor is a divalent metal cation.

The protein resides in the cytoplasm. The enzyme catalyses NAD(+) + ATP = ADP + NADP(+) + H(+). Its function is as follows. Involved in the regulation of the intracellular balance of NAD and NADP, and is a key enzyme in the biosynthesis of NADP. Catalyzes specifically the phosphorylation on 2'-hydroxyl of the adenosine moiety of NAD to yield NADP. The protein is NAD kinase of Cytophaga hutchinsonii (strain ATCC 33406 / DSM 1761 / CIP 103989 / NBRC 15051 / NCIMB 9469 / D465).